The sequence spans 314 residues: Pyridoxal 5'-phosphate synthase-like subunit PDX1.2 (314 aa).

Ala-2 carries the post-translational modification N-acetylalanine.

Belongs to the PdxS/SNZ family. Homodimer or heterodimer with PDX1.1 or PDX1.3. No interaction with PDX2. As to expression, expressed in callus tissues, flowers and roots. Weakly expressed in leaves and stems.

It localises to the cytoplasm. In terms of biological role, the protein has no function in the formation of pyridoxal 5'-phosphate. This is Pyridoxal 5'-phosphate synthase-like subunit PDX1.2 (PDX12) from Arabidopsis thaliana (Mouse-ear cress).